The following is a 194-amino-acid chain: Holliday junction branch migration complex subunit RuvA (194 aa).

Residues 1–64 form a domain I region; sequence MIGRITGLLL…EDVHLLFGFM (64 aa). Positions 65 to 140 are domain II; sequence TEQERALFRQ…KIDPVAILSE (76 aa). Positions 140–143 are flexible linker; that stretch reads EAGA. Positions 144-194 are domain III; the sequence is AASNVDKDILSALLALGYNGREVNRALEQLSEGVTVSDGIMQSLKFLSKVK.

It belongs to the RuvA family. Homotetramer. Forms an RuvA(8)-RuvB(12)-Holliday junction (HJ) complex. HJ DNA is sandwiched between 2 RuvA tetramers; dsDNA enters through RuvA and exits via RuvB. An RuvB hexamer assembles on each DNA strand where it exits the tetramer. Each RuvB hexamer is contacted by two RuvA subunits (via domain III) on 2 adjacent RuvB subunits; this complex drives branch migration. In the full resolvosome a probable DNA-RuvA(4)-RuvB(12)-RuvC(2) complex forms which resolves the HJ.

It is found in the cytoplasm. Functionally, the RuvA-RuvB-RuvC complex processes Holliday junction (HJ) DNA during genetic recombination and DNA repair, while the RuvA-RuvB complex plays an important role in the rescue of blocked DNA replication forks via replication fork reversal (RFR). RuvA specifically binds to HJ cruciform DNA, conferring on it an open structure. The RuvB hexamer acts as an ATP-dependent pump, pulling dsDNA into and through the RuvAB complex. HJ branch migration allows RuvC to scan DNA until it finds its consensus sequence, where it cleaves and resolves the cruciform DNA. The chain is Holliday junction branch migration complex subunit RuvA from Nitrosomonas eutropha (strain DSM 101675 / C91 / Nm57).